The sequence spans 61 residues: Small ribosomal subunit protein bS21 (61 aa).

Positions 36–61 (EHYESPSVKRKKKAEAARKRKYKYGR) are disordered. The segment covering 43–61 (VKRKKKAEAARKRKYKYGR) has biased composition (basic residues).

This sequence belongs to the bacterial ribosomal protein bS21 family.

The protein is Small ribosomal subunit protein bS21 (rpsU) of Caldanaerobacter subterraneus subsp. tengcongensis (strain DSM 15242 / JCM 11007 / NBRC 100824 / MB4) (Thermoanaerobacter tengcongensis).